The following is a 126-amino-acid chain: Apolipoprotein C-IV (126 aa).

The signal sequence occupies residues M1–C27.

Belongs to the apolipoprotein C4 family.

The protein resides in the secreted. Its function is as follows. May participate in lipoprotein metabolism. This is Apolipoprotein C-IV (APOC4) from Aotus nancymaae (Ma's night monkey).